Here is a 203-residue protein sequence, read N- to C-terminus: Small ribosomal subunit protein uS4 (203 aa).

A disordered region spans residues Leu-20–Ser-45. Residues Met-92–Ala-155 enclose the S4 RNA-binding domain.

This sequence belongs to the universal ribosomal protein uS4 family. In terms of assembly, part of the 30S ribosomal subunit. Contacts protein S5. The interaction surface between S4 and S5 is involved in control of translational fidelity.

Its function is as follows. One of the primary rRNA binding proteins, it binds directly to 16S rRNA where it nucleates assembly of the body of the 30S subunit. With S5 and S12 plays an important role in translational accuracy. This is Small ribosomal subunit protein uS4 from Synechococcus sp. (strain JA-3-3Ab) (Cyanobacteria bacterium Yellowstone A-Prime).